A 2322-amino-acid polypeptide reads, in one-letter code: Chondroitin sulfate proteoglycan 4 (2322 aa).

The first 29 residues, 1-29, serve as a signal peptide directing secretion; it reads MQSGPRPPLPAPGLALALTLTMLARLASA. Laminin G-like domains are found at residues 30 to 192 and 202 to 380; these read ASFF…HEGC and VALG…AAGC. The interval 30 to 639 is globular or compact configuration stabilized by disulfide bonds; that stretch reads ASFFGENHLE…HRGGPAQDLT (610 aa). Residues 30–639 are neurite growth inhibition; the sequence is ASFFGENHLE…HRGGPAQDLT (610 aa). The Extracellular segment spans residues 30-2224; that stretch reads ASFFGENHLE…LSFLEANMFS (2195 aa). The N-linked (GlcNAc...) asparagine glycan is linked to Asn130. Residues Cys169 and Cys192 are joined by a disulfide bond. Asn348 carries an N-linked (GlcNAc...) asparagine glycan. Cys354 and Cys380 are disulfide-bonded. Residue Asn427 is glycosylated (N-linked (GlcNAc...) asparagine). CSPG repeat units follow at residues 428–523, 553–645, and 662–764; these read FTQL…LEVS, PHII…VSDG, and AIQI…LEVQ. The segment at 574-1040 is interaction with COL6A2; that stretch reads GPEVFQAYDP…RGGRRLLTTD (467 aa). Positions 631–1446 are interaction with COL5A1; the sequence is RGGPAQDLTF…SETLTDSFVL (816 aa). N-linked (GlcNAc...) asparagine glycosylation is found at Asn685 and Asn772. CSPG repeat units lie at residues 783 to 878 and 898 to 989; these read TVWM…FRVT and DAPV…FVAT. O-linked (Xyl...) (chondroitin sulfate) serine glycosylation occurs at Ser995. CSPG repeat units lie at residues 1018–1110, 1126–1216, 1238–1337, 1356–1449, 1473–1563, 1581–1679, 1704–1803, 1832–1924, and 1941–2029; these read APVQ…VSDG, YLRV…FSVE, PLKL…LDVA, AAIP…LMAN, PPIL…LSDG, LLSL…LQLS, PSHL…FRAH, PPQP…MSDG, and AIEV…VLAL. 2 N-linked (GlcNAc...) asparagine glycosylation sites follow: Asn1131 and Asn1202. Residues Asn1364 and Asn1449 are each glycosylated (N-linked (GlcNAc...) asparagine). Residues 1586 to 2221 form a neurite growth inhibition region; it reads GSQTLTVCPG…GGFLSFLEAN (636 aa). The interval 1587–2221 is cysteine-containing; that stretch reads SQTLTVCPGS…GGFLSFLEAN (635 aa). Residue Asn1645 is glycosylated (N-linked (GlcNAc...) asparagine). Residues Asn1909, Asn2016, Asn2034, Asn2040, and Asn2075 are each glycosylated (N-linked (GlcNAc...) asparagine). One copy of the CSPG 15 repeat lies at 2038 to 2147; sequence VVNVTVRALL…AGDSLTLELW (110 aa). Residues 2182–2206 are disordered; sequence ARTEAGKPESSTPTGEPGPMASSPE. Residues 2225–2245 traverse the membrane as a helical segment; the sequence is VIIPMCLVLLLLALILPLLFY. Topologically, residues 2246-2322 are cytoplasmic; the sequence is LRKRNKTGKH…PALKNGQYWV (77 aa). Thr2252 bears the Phosphothreonine; by PKC/PRKCA mark. The PDZ-binding motif lies at 2320–2322; sequence YWV.

As to quaternary structure, interacts with the first PDZ domain of MPDZ. Interacts with PRKCA. Binds TNC, laminin-1, COL5A1 and COL6A2. Interacts with PLG and angiostatin. Binds FGF2 and PDGFA. Interacts with GRIP1, GRIP2 and GRIA2. Forms a ternary complex with GRIP1 and GRIA2. Interacts with LGALS3 and the integrin composed of ITGB1 and ITGA3. Interacts with ITGA4 through its chondroitin sulfate glycosaminoglycan. Interacts with BCAR1, CDC42 and ACK1. Interacts with MMP16. In terms of assembly, (Microbial infection) Interacts with C.difficile toxin TcdB, suggesting that it may act as a receptor for TcdB. Post-translationally, O-glycosylated; contains glycosaminoglycan chondroitin sulfate which are required for proper localization and function in stress fiber formation. Involved in interaction with MMP16 and ITGA4. Phosphorylation by PRKCA regulates its subcellular location and function in cell motility. Detected in fibroblasts (at protein level). Detected in placenta (at protein level). Detected in malignant melanoma cells.

The protein resides in the cell membrane. It localises to the apical cell membrane. Its subcellular location is the cell projection. The protein localises to the lamellipodium membrane. It is found in the cell surface. Functionally, proteoglycan playing a role in cell proliferation and migration which stimulates endothelial cells motility during microvascular morphogenesis. May also inhibit neurite outgrowth and growth cone collapse during axon regeneration. Cell surface receptor for collagen alpha 2(VI) which may confer cells ability to migrate on that substrate. Binds through its extracellular N-terminus growth factors, extracellular matrix proteases modulating their activity. May regulate MPP16-dependent degradation and invasion of type I collagen participating in melanoma cells invasion properties. May modulate the plasminogen system by enhancing plasminogen activation and inhibiting angiostatin. Also functions as a signal transducing protein by binding through its cytoplasmic C-terminus scaffolding and signaling proteins. May promote retraction fiber formation and cell polarization through Rho GTPase activation. May stimulate alpha-4, beta-1 integrin-mediated adhesion and spreading by recruiting and activating a signaling cascade through CDC42, ACK1 and BCAR1. May activate FAK and ERK1/ERK2 signaling cascades. The polypeptide is Chondroitin sulfate proteoglycan 4 (CSPG4) (Homo sapiens (Human)).